The following is a 104-amino-acid chain: uncharacterized protein (104 aa).

Residues 24–69 adopt a coiled-coil conformation; that stretch reads VIKQIIEKYNDKVKELDTLKNQYQNLQQDYENLKQQVSLQRQTMIS.

This is an uncharacterized protein from Acanthamoeba polyphaga mimivirus (APMV).